Consider the following 1214-residue polypeptide: Zinc finger E-box-binding homeobox 2 (1214 aa).

The segment at 1-101 (MKQPIMADGP…GVEHPWHNNE (101 aa)) is disordered. Positions 12 to 24 (CKRRKQANPRRKN) are enriched in basic residues. The segment covering 57 to 74 (DQETSPASVPNHESSPHV) has biased composition (polar residues). Residues 89–98 (REGGVEHPWH) are compositionally biased toward basic and acidic residues. At Ser-142 the chain carries Phosphoserine. 3 consecutive C2H2-type zinc fingers follow at residues 211–234 (LTCP…KYRH), 241–263 (FSCP…MVTH), and 282–304 (FKCT…LRIH). A C2H2-type 4; atypical zinc finger spans residues 310 to 334 (YECPNCKKRFSHSGSYSSHISSKKC). Phosphoserine occurs at positions 356, 360, and 364. At Lys-377 the chain carries N6-acetyllysine. Lys-391 is covalently cross-linked (Glycyl lysine isopeptide (Lys-Gly) (interchain with G-Cter in SUMO); alternate). Residue Lys-391 forms a Glycyl lysine isopeptide (Lys-Gly) (interchain with G-Cter in SUMO2); alternate linkage. Positions 437-487 (QHLGVGMEAPLLGFPTMNSNLSEVQKVLQIVDNTVSRQKMDCKAEEISKLK) are SMAD-MH2 binding domain. Residues Lys-479 and Lys-555 each participate in a glycyl lysine isopeptide (Lys-Gly) (interchain with G-Cter in SUMO2) cross-link. The C2H2-type 5; atypical zinc-finger motif lies at 581 to 605 (FSCQFCKESFPGPIPLHQHERYLCK). Residues Lys-611 and Lys-632 each participate in a glycyl lysine isopeptide (Lys-Gly) (interchain with G-Cter in SUMO2) cross-link. A DNA-binding region (homeobox; atypical) is located at residues 644 to 703 (GMTSPINPYKDHMSVLKAYYAMNMEPNSDELLKISIAVGLPQEFVKEWFEQRKVYQYSNS). A Phosphoserine modification is found at Ser-647. The span at 702-715 (NSRSPSLERSSKPL) shows a compositional bias: low complexity. Disordered stretches follow at residues 702 to 740 (NSRS…DSIT), 771 to 810 (PVEK…SSEE), and 832 to 857 (ATKN…ENSD). Lys-713 is covalently cross-linked (Glycyl lysine isopeptide (Lys-Gly) (interchain with G-Cter in SUMO2)). Phosphoserine is present on residues Ser-731 and Ser-780. Low complexity-rich tracts occupy residues 780-808 (SNTP…SFSS) and 840-854 (SSIS…SSSE). Thr-782 carries the phosphothreonine modification. Phosphoserine is present on Ser-784. Lys-866 is covalently cross-linked (Glycyl lysine isopeptide (Lys-Gly) (interchain with G-Cter in SUMO); alternate). Residue Lys-866 forms a Glycyl lysine isopeptide (Lys-Gly) (interchain with G-Cter in SUMO2); alternate linkage. C2H2-type zinc fingers lie at residues 999-1021 (YACD…KYEH) and 1027-1049 (HQCQ…SRLH). The C2H2-type 8; atypical zinc-finger motif lies at 1055–1076 (YQCDKCGKRFSHSGSYSQHMNH). A disordered region spans residues 1117–1214 (TPQGYSDSEE…HEEDNMEDGM (98 aa)). Residues Ser-1122 and Ser-1124 each carry the phosphoserine modification. A compositionally biased stretch (basic and acidic residues) spans 1127-1155 (RESMPRDGESEKEHEKEGEDGYGKLGRQD). Residues 1156–1167 (GDEEFEEEEEES) are compositionally biased toward acidic residues. Basic and acidic residues-rich tracts occupy residues 1168–1179 (ENKSMDTDPETI) and 1186–1205 (GDHS…KSDH). The residue at position 1203 (Ser-1203) is a Phosphoserine.

The protein belongs to the delta-EF1/ZFH-1 C2H2-type zinc-finger family. In terms of assembly, binds activated SMAD1, activated SMAD2 and activated SMAD3; binding with SMAD4 is not detected. Interacts with CBX4 and CTBP1. In terms of processing, sumoylation on Lys-391 and Lys-866 is promoted by the E3 SUMO-protein ligase CBX4, and impairs interaction with CTBP1 and transcription repression activity.

It localises to the nucleus. Its subcellular location is the chromosome. In terms of biological role, transcriptional inhibitor that binds to DNA sequence 5'-CACCT-3' in different promoters. Represses transcription of E-cadherin. Represses expression of MEOX2. The chain is Zinc finger E-box-binding homeobox 2 from Homo sapiens (Human).